The chain runs to 368 residues: uncharacterized protein (368 aa).

Residues 156 to 182 (SNVNAHNNNNNSNNNNNNNNNSNNNNN) show a composition bias toward low complexity. Disordered stretches follow at residues 156 to 213 (SNVN…SSPY), 228 to 259 (ASTNLSSSSSNNSMHTNPTTATSTSADLINDL), and 291 to 319 (STTSSSIGTNINPPQHSPSPSQREDFSTA). Polar residues predominate over residues 183–194 (LYNQTQFSTRYF). 2 stretches are compositionally biased toward low complexity: residues 195–213 (NSNSSPSLTSSTSNSSSPY) and 228–240 (ASTNLSSSSSNNS). Composition is skewed to polar residues over residues 241-254 (MHTNPTTATSTSAD) and 297-311 (IGTNINPPQHSPSPS).

This is an uncharacterized protein from Saccharomyces cerevisiae (strain ATCC 204508 / S288c) (Baker's yeast).